The sequence spans 145 residues: Putative pre-16S rRNA nuclease (145 aa).

It belongs to the YqgF nuclease family.

The protein resides in the cytoplasm. Its function is as follows. Could be a nuclease involved in processing of the 5'-end of pre-16S rRNA. This chain is Putative pre-16S rRNA nuclease, found in Pseudomonas fluorescens.